Consider the following 272-residue polypeptide: HMP-PP phosphatase (272 aa).

The Nucleophile role is filled by D8. Residues D8, D10, and D212 each contribute to the Mg(2+) site.

This sequence belongs to the HAD-like hydrolase superfamily. Cof family. Requires Mg(2+) as cofactor.

The enzyme catalyses 4-amino-2-methyl-5-(diphosphooxymethyl)pyrimidine + H2O = 4-amino-2-methyl-5-(phosphooxymethyl)pyrimidine + phosphate + H(+). In terms of biological role, catalyzes the hydrolysis of 4-amino-2-methyl-5-hydroxymethylpyrimidine pyrophosphate (HMP-PP) to 4-amino-2-methyl-5-hydroxymethylpyrimidine phosphate (HMP-P). The protein is HMP-PP phosphatase of Klebsiella pneumoniae (strain 342).